The following is a 301-amino-acid chain: Cilia- and flagella-associated protein 161 (301 aa).

Its subcellular location is the cytoplasm. The protein localises to the cytoskeleton. It is found in the cilium axoneme. In terms of biological role, microtubule inner protein (MIP) part of the dynein-decorated doublet microtubules (DMTs) in cilia axoneme, which is required for motile cilia beating. This Danio rerio (Zebrafish) protein is Cilia- and flagella-associated protein 161.